The chain runs to 115 residues: MRYVASYLLAALGGNTSPSAKDIKKILDSVGIEADDDRLDKVISELNGKNIEDVIAQGIGKLASVPAGGAVAVSAAPGSAAPAAGSAPAAAEERKEEKKEESEESDDDMGFGLFD.

Met1 is subject to N-acetylmethionine. Residues Ser17 and Ser19 each carry the phosphoserine modification. Position 21 is an N6-acetyllysine; alternate (Lys21). Lys21 is modified (N6-succinyllysine; alternate). Residues 76–90 are compositionally biased toward low complexity; that stretch reads APGSAAPAAGSAPAA. Positions 76-115 are disordered; it reads APGSAAPAAGSAPAAAEERKEEKKEESEESDDDMGFGLFD. A phosphoserine mark is found at Ser79 and Ser86. Residues 91 to 101 are compositionally biased toward basic and acidic residues; that stretch reads AEERKEEKKEE. Ser102 and Ser105 each carry phosphoserine.

It belongs to the eukaryotic ribosomal protein P1/P2 family. Heterodimer with RPLP1 at the lateral ribosomal stalk of the large ribosomal subunit.

Its function is as follows. Plays an important role in the elongation step of protein synthesis. The polypeptide is Large ribosomal subunit protein P2 (RPLP2) (Equus caballus (Horse)).